The following is a 1343-amino-acid chain: DNA-directed RNA polymerase subunit beta (1343 aa).

The protein belongs to the RNA polymerase beta chain family. The RNAP catalytic core consists of 2 alpha, 1 beta, 1 beta' and 1 omega subunit. When a sigma factor is associated with the core the holoenzyme is formed, which can initiate transcription.

It carries out the reaction RNA(n) + a ribonucleoside 5'-triphosphate = RNA(n+1) + diphosphate. Functionally, DNA-dependent RNA polymerase catalyzes the transcription of DNA into RNA using the four ribonucleoside triphosphates as substrates. The protein is DNA-directed RNA polymerase subunit beta of Haemophilus influenzae (strain PittEE).